A 476-amino-acid chain; its full sequence is Bifunctional protein HldE (476 aa).

The segment at 1 to 318 (MAQYSAEFKQ…ENAIHARPET (318 aa)) is ribokinase. Position 195 to 198 (195 to 198 (NMSE)) interacts with ATP. Residue Asp-264 is part of the active site. A cytidylyltransferase region spans residues 344-476 (MTNGCFDILH…VIEKIKLLKD (133 aa)).

This sequence in the N-terminal section; belongs to the carbohydrate kinase PfkB family. It in the C-terminal section; belongs to the cytidylyltransferase family. Homodimer.

It catalyses the reaction D-glycero-beta-D-manno-heptose 7-phosphate + ATP = D-glycero-beta-D-manno-heptose 1,7-bisphosphate + ADP + H(+). The catalysed reaction is D-glycero-beta-D-manno-heptose 1-phosphate + ATP + H(+) = ADP-D-glycero-beta-D-manno-heptose + diphosphate. It participates in nucleotide-sugar biosynthesis; ADP-L-glycero-beta-D-manno-heptose biosynthesis; ADP-L-glycero-beta-D-manno-heptose from D-glycero-beta-D-manno-heptose 7-phosphate: step 1/4. It functions in the pathway nucleotide-sugar biosynthesis; ADP-L-glycero-beta-D-manno-heptose biosynthesis; ADP-L-glycero-beta-D-manno-heptose from D-glycero-beta-D-manno-heptose 7-phosphate: step 3/4. Its function is as follows. Catalyzes the phosphorylation of D-glycero-D-manno-heptose 7-phosphate at the C-1 position to selectively form D-glycero-beta-D-manno-heptose-1,7-bisphosphate. Functionally, catalyzes the ADP transfer from ATP to D-glycero-beta-D-manno-heptose 1-phosphate, yielding ADP-D-glycero-beta-D-manno-heptose. The sequence is that of Bifunctional protein HldE from Haemophilus influenzae (strain 86-028NP).